An 863-amino-acid chain; its full sequence is Leucine--tRNA ligase (863 aa).

The 'HIGH' region signature appears at 40 to 51 (PYPSGAGLHVGH). The 'KMSKS' region motif lies at 635–639 (KMSKS). Lysine 638 is an ATP binding site.

This sequence belongs to the class-I aminoacyl-tRNA synthetase family.

Its subcellular location is the cytoplasm. The enzyme catalyses tRNA(Leu) + L-leucine + ATP = L-leucyl-tRNA(Leu) + AMP + diphosphate. The chain is Leucine--tRNA ligase from Leptospira interrogans serogroup Icterohaemorrhagiae serovar copenhageni (strain Fiocruz L1-130).